The following is a 409-amino-acid chain: CUB domain-containing protein (409 aa).

An N-terminal signal peptide occupies residues 1–18 (MFLFSLTVLSALVLITES). A compositionally biased stretch (low complexity) spans 154 to 229 (TEASTTAQET…TTAPTTAPAP (76 aa)). The tract at residues 154–230 (TEASTTAQET…TAPTTAPAPI (77 aa)) is disordered. Cys232 and Cys257 are oxidised to a cystine. In terms of domain architecture, CUB spans 232–338 (CGGVLRGRGT…QEYVDYYYYD (107 aa)). The tract at residues 389-409 (VQGAADSESEASASSESSDED) is disordered. A compositionally biased stretch (low complexity) spans 392-409 (AADSESEASASSESSDED).

As to expression, component of the acid-insoluble and acid-soluble organic matrix of the aragonitic skeleton (at protein level).

The protein resides in the secreted. This is CUB domain-containing protein from Acropora millepora (Staghorn coral).